The following is a 287-amino-acid chain: MSFFNFKAFGRNSKKNKNQPLNVAQPPAMNTIYSSPHSSNSRLSLRNKHHSPKRHSQTSFPAQKSTPQSQQLTSTTPQSQQQEASERSESQQIMFLSEPFVRTALVKGSFKTIVQLPKYVDLGEWIALNVFEFFTNLNQFYGVVAEYVTPDAYPTMNAGPHTDYLWLDANNRQVSLPASQYIDLALTWINNKVNDKNLFPTKNGLPFPQQFSRDVQRIMVQMFRIFAHIYHHHFDKIVHLSLEAHWNSFFSHFISFAKEFKIIDRKEMAPLLPLIESFEKQGKIIYN.

Residues 1-89 are disordered; that stretch reads MSFFNFKAFG…QQQEASERSE (89 aa). A Phosphotyrosine modification is found at Y33. Residues 34-44 show a composition bias toward low complexity; that stretch reads SSPHSSNSRLS. Residues 45 to 56 show a composition bias toward basic residues; that stretch reads LRNKHHSPKRHS. S59 carries the post-translational modification Phosphoserine. A compositionally biased stretch (low complexity) spans 63–83; it reads QKSTPQSQQLTSTTPQSQQQE. A Phosphothreonine modification is found at T76.

The protein belongs to the MOB1/phocein family. Interacts with protein kinase CBK1 to form the RAM CBK1-MOB2 kinase complex.

The protein localises to the nucleus. The protein resides in the cytoplasm. Its function is as follows. Functions as an activator subunit for the CBK1 protein kinase. Part of the regulation of ACE2 activity and cellular morphogenesis (RAM) signaling network. Required for coordinating polarized cell growth during interphase with the onset of mitosis. Required for mother/daughter cell separation after cytokinesis. Also has a role in the prevention of nuclear export of ACE2 from the daughter cell nucleus after mitotic exit. It coordinates ACE2-dependent transcription with mitotic exit network activation. The chain is CBK1 kinase activator protein MOB2 (MOB2) from Saccharomyces cerevisiae (strain ATCC 204508 / S288c) (Baker's yeast).